Here is a 980-residue protein sequence, read N- to C-terminus: Protein translocase subunit SecA (980 aa).

ATP contacts are provided by residues Q109, 127–131 (GEGKT), and D529. The interval 954–980 (QKIGRNDPCPCGSGKKYKHCHGKDNPQ) is disordered. Zn(2+)-binding residues include C962, C964, C973, and H974.

This sequence belongs to the SecA family. As to quaternary structure, monomer and homodimer. Part of the essential Sec protein translocation apparatus which comprises SecA, SecYEG and auxiliary proteins SecDF. Other proteins may also be involved. The cofactor is Zn(2+).

Its subcellular location is the cell inner membrane. The protein localises to the cytoplasm. The catalysed reaction is ATP + H2O + cellular proteinSide 1 = ADP + phosphate + cellular proteinSide 2.. Its function is as follows. Part of the Sec protein translocase complex. Interacts with the SecYEG preprotein conducting channel. Has a central role in coupling the hydrolysis of ATP to the transfer of proteins into and across the cell membrane, serving as an ATP-driven molecular motor driving the stepwise translocation of polypeptide chains across the membrane. The chain is Protein translocase subunit SecA from Brachyspira hyodysenteriae (strain ATCC 49526 / WA1).